We begin with the raw amino-acid sequence, 167 residues long: uncharacterized protein (167 aa).

Basic residues predominate over residues 1–10; the sequence is MPLRRCRAWR. The disordered stretch occupies residues 1–23; it reads MPLRRCRAWRGHSQPGTGSRSNE.

This is an uncharacterized protein from Sinorhizobium fredii (strain NBRC 101917 / NGR234).